The following is an 810-amino-acid chain: Soluble starch synthase 2-3, chloroplastic/amyloplastic (810 aa).

A chloroplast-targeting transit peptide spans 1–16; sequence MSSAVVASSTTFLVAL. Disordered stretches follow at residues 43–265 and 281–313; these read GRAG…PIPA and EPDAAEDGDDDDDWADSDASDSEIDQDDDSGPL. Residues 63–83 are compositionally biased toward basic and acidic residues; that stretch reads RDAGVVRRADDGENEAAVERA. Acidic residues predominate over residues 84-93; that stretch reads GEDDEEEEEF. Residues 102 to 116 show a composition bias toward basic residues; the sequence is RSRRGGVGKVLKRRG. A compositionally biased stretch (low complexity) spans 129–148; it reads DAARVRGAAAPAPAPTQDAA. The segment covering 281 to 310 has biased composition (acidic residues); sequence EPDAAEDGDDDDDWADSDASDSEIDQDDDS. ADP-alpha-D-glucose is bound at residue Lys-333.

The protein belongs to the glycosyltransferase 1 family. Bacterial/plant glycogen synthase subfamily. In terms of tissue distribution, expressed most exclusively in endosperm.

Its subcellular location is the plastid. The protein resides in the amyloplast. It is found in the chloroplast. It catalyses the reaction [(1-&gt;4)-alpha-D-glucosyl](n) + ADP-alpha-D-glucose = [(1-&gt;4)-alpha-D-glucosyl](n+1) + ADP + H(+). It participates in glycan biosynthesis; starch biosynthesis. Plays an important role during endosperm starch synthesis. Determines the type of amylopectin structure of starch grain. Synthesizes long B1 amylopectin chains by elongating short A and B1 chains, independently of the other soluble starch synthases. Barely active in japonica subspecies. The chain is Soluble starch synthase 2-3, chloroplastic/amyloplastic (SSII-3) from Oryza sativa subsp. indica (Rice).